A 125-amino-acid polypeptide reads, in one-letter code: Antitoxin MazE5 (125 aa).

As to quaternary structure, forms a complex with cognate toxin MazF5.

In terms of biological role, antitoxin component of a type II toxin-antitoxin (TA) system. Upon expression in M.smegmatis neutralizes the effect of cognate toxin MazF5. The sequence is that of Antitoxin MazE5 (mazE5) from Mycobacterium tuberculosis (strain ATCC 25618 / H37Rv).